We begin with the raw amino-acid sequence, 442 residues long: Hydrolase phmG (442 aa).

The active-site Nucleophile is the serine 259.

It belongs to the AB hydrolase superfamily. FUS2 hydrolase family. Homodimer.

It functions in the pathway mycotoxin biosynthesis. Hydrolyase; part of the gene cluster that mediates the biosynthesis of the mycotoxins phomacins, leucine-derived cytochalasans with potent actin polymerization-inhibitory activities and monocot-specific antigerminative activities. The first step in the pathway is catalyzed by the hybrid PKS-NRPS phmA, assisted by the enoyl reductase phmE, that are responsible for fusion of the leucine precursor and the polyketide backbone to produce a 2-pyrrolidone intermediate. The polyketide synthase module (PKS) of phmA is responsible for the synthesis of the polyketide backbone and the downstream nonribosomal peptide synthetase (NRPS) amidates the carboxyl end of the polyketide with the leucine precursor. Because phmA lacks a designated enoylreductase (ER) domain, the required activity is provided the enoyl reductase phmE. Reduction by the hydrolyase phmG, followed by dehydration and intra-molecular Diels-Alder cyclization by the Diels-Alderase phmD then yield the required isoindolone-fused macrocycle. A number of oxidative steps catalyzed by the tailoring cytochrome P450 monooxygenase phmB, the FAD-linked oxidoreductase phmC and the short-chain dehydrogenase/reductase phmF, are further required to afford the final products, phomacin D and phomacin E. The sequence is that of Hydrolase phmG from Phaeosphaeria nodorum (strain SN15 / ATCC MYA-4574 / FGSC 10173) (Glume blotch fungus).